A 211-amino-acid polypeptide reads, in one-letter code: Mitotic spindle assembly checkpoint protein MAD2B (211 aa).

The HORMA domain occupies 13 to 203; that stretch reads QVVADILCEF…SDILKMQLYV (191 aa).

Homooligomer. Interacts with rev1. Interacts with rev3l. Interacts with fzr1 (in complex with the anaphase promoting complex APC). May interact with cdc20.

It is found in the nucleus. The protein resides in the cytoplasm. It localises to the cytoskeleton. Its subcellular location is the spindle. Functionally, adapter protein able to interact with different proteins and involved in different biological processes. Mediates the interaction between the error-prone DNA polymerase zeta catalytic subunit rev3l and the inserter polymerase rev1, thereby mediating the second polymerase switching in translesion DNA synthesis. Translesion DNA synthesis releases the replication blockade of replicative polymerases, stalled in presence of DNA lesions. May also play a role in signal transduction in response to DNA damage. May regulate the activation of the anaphase promoting complex APC thereby regulating progression through the cell cycle. Through transcriptional regulation may play a role in epithelial-mesenchymal transdifferentiation. In Xenopus tropicalis (Western clawed frog), this protein is Mitotic spindle assembly checkpoint protein MAD2B (mad2l2).